Here is a 265-residue protein sequence, read N- to C-terminus: Undecaprenyl-diphosphatase (265 aa).

Helical transmembrane passes span 15 to 37 (GLTEFLPVSSTGHLIITGYLLEY), 41 to 61 (KAESFQVAIQLGAILAVVFLY), 85 to 105 (YLLALTSAPASVLGLLTHSFI), 109 to 129 (LFGPVTVAWALAAGALYILAV), 144 to 164 (VSPALALGIGMFQCLALWPGF), 183 to 203 (LAAEYSFVAAVPIMFAATGYD), 218 to 238 (FWAVGLLVSFASAWAAVKGFI), and 244 to 264 (VTFRPFAWYRLALAPVVLLFW).

The protein belongs to the UppP family.

Its subcellular location is the cell inner membrane. The enzyme catalyses di-trans,octa-cis-undecaprenyl diphosphate + H2O = di-trans,octa-cis-undecaprenyl phosphate + phosphate + H(+). Catalyzes the dephosphorylation of undecaprenyl diphosphate (UPP). Confers resistance to bacitracin. In Oleidesulfovibrio alaskensis (strain ATCC BAA-1058 / DSM 17464 / G20) (Desulfovibrio alaskensis), this protein is Undecaprenyl-diphosphatase.